Consider the following 273-residue polypeptide: Dermonecrotic toxin LhSicTox-alphaIA2aviii (273 aa).

Histidine 5 is a catalytic residue. Glutamate 25 and aspartate 27 together coordinate Mg(2+). Histidine 41 (nucleophile) is an active-site residue. Cystine bridges form between cysteine 45/cysteine 51 and cysteine 47/cysteine 190. Aspartate 85 provides a ligand contact to Mg(2+).

Belongs to the arthropod phospholipase D family. Class II subfamily. Mg(2+) serves as cofactor. Expressed by the venom gland.

The protein localises to the secreted. It carries out the reaction an N-(acyl)-sphingosylphosphocholine = an N-(acyl)-sphingosyl-1,3-cyclic phosphate + choline. It catalyses the reaction an N-(acyl)-sphingosylphosphoethanolamine = an N-(acyl)-sphingosyl-1,3-cyclic phosphate + ethanolamine. The catalysed reaction is a 1-acyl-sn-glycero-3-phosphocholine = a 1-acyl-sn-glycero-2,3-cyclic phosphate + choline. The enzyme catalyses a 1-acyl-sn-glycero-3-phosphoethanolamine = a 1-acyl-sn-glycero-2,3-cyclic phosphate + ethanolamine. Functionally, dermonecrotic toxins cleave the phosphodiester linkage between the phosphate and headgroup of certain phospholipids (sphingolipid and lysolipid substrates), forming an alcohol (often choline) and a cyclic phosphate. This toxin acts on sphingomyelin (SM). It may also act on ceramide phosphoethanolamine (CPE), lysophosphatidylcholine (LPC) and lysophosphatidylethanolamine (LPE), but not on lysophosphatidylserine (LPS), and lysophosphatidylglycerol (LPG). It acts by transphosphatidylation, releasing exclusively cyclic phosphate products as second products. Induces dermonecrosis, hemolysis, increased vascular permeability, edema, inflammatory response, and platelet aggregation. In Loxosceles hirsuta (Recluse spider), this protein is Dermonecrotic toxin LhSicTox-alphaIA2aviii.